The following is a 254-amino-acid chain: Aspartate/glutamate leucyltransferase (254 aa).

Belongs to the R-transferase family. Bpt subfamily.

It is found in the cytoplasm. The enzyme catalyses N-terminal L-glutamyl-[protein] + L-leucyl-tRNA(Leu) = N-terminal L-leucyl-L-glutamyl-[protein] + tRNA(Leu) + H(+). The catalysed reaction is N-terminal L-aspartyl-[protein] + L-leucyl-tRNA(Leu) = N-terminal L-leucyl-L-aspartyl-[protein] + tRNA(Leu) + H(+). Its function is as follows. Functions in the N-end rule pathway of protein degradation where it conjugates Leu from its aminoacyl-tRNA to the N-termini of proteins containing an N-terminal aspartate or glutamate. This Xylella fastidiosa (strain M23) protein is Aspartate/glutamate leucyltransferase.